The following is a 91-amino-acid chain: uncharacterized protein (91 aa).

A signal peptide spans 1-21 (MKIISKMLVGALALAVTNVYA).

It belongs to the BhsA/McbA family.

It localises to the periplasm. This is an uncharacterized protein from Escherichia coli (strain K12).